The primary structure comprises 581 residues: Proline--tRNA ligase (581 aa).

This sequence belongs to the class-II aminoacyl-tRNA synthetase family. ProS type 1 subfamily. As to quaternary structure, homodimer.

It is found in the cytoplasm. It catalyses the reaction tRNA(Pro) + L-proline + ATP = L-prolyl-tRNA(Pro) + AMP + diphosphate. Its function is as follows. Catalyzes the attachment of proline to tRNA(Pro) in a two-step reaction: proline is first activated by ATP to form Pro-AMP and then transferred to the acceptor end of tRNA(Pro). As ProRS can inadvertently accommodate and process non-cognate amino acids such as alanine and cysteine, to avoid such errors it has two additional distinct editing activities against alanine. One activity is designated as 'pretransfer' editing and involves the tRNA(Pro)-independent hydrolysis of activated Ala-AMP. The other activity is designated 'posttransfer' editing and involves deacylation of mischarged Ala-tRNA(Pro). The misacylated Cys-tRNA(Pro) is not edited by ProRS. The sequence is that of Proline--tRNA ligase from Delftia acidovorans (strain DSM 14801 / SPH-1).